We begin with the raw amino-acid sequence, 84 residues long: Large ribosomal subunit protein bL27 (84 aa).

A disordered region spans residues 1 to 22 (MAHKKAGGSTRNGRDSESKRLG).

It belongs to the bacterial ribosomal protein bL27 family.

The chain is Large ribosomal subunit protein bL27 from Shewanella amazonensis (strain ATCC BAA-1098 / SB2B).